A 337-amino-acid chain; its full sequence is DNA-directed RNA polymerase subunit alpha (337 aa).

An alpha N-terminal domain (alpha-NTD) region spans residues 1-233 (MIQKNWQELI…DQLSIFVNFE (233 aa)). The segment at 249–337 (FNPALLKKVD…DLAKRYEDQY (89 aa)) is alpha C-terminal domain (alpha-CTD).

Belongs to the RNA polymerase alpha chain family. As to quaternary structure, homodimer. The RNAP catalytic core consists of 2 alpha, 1 beta, 1 beta' and 1 omega subunit. When a sigma factor is associated with the core the holoenzyme is formed, which can initiate transcription.

It carries out the reaction RNA(n) + a ribonucleoside 5'-triphosphate = RNA(n+1) + diphosphate. DNA-dependent RNA polymerase catalyzes the transcription of DNA into RNA using the four ribonucleoside triphosphates as substrates. This chain is DNA-directed RNA polymerase subunit alpha, found in Brucella ovis (strain ATCC 25840 / 63/290 / NCTC 10512).